A 1297-amino-acid chain; its full sequence is Phosphoribosylformylglycinamidine synthase (1297 aa).

Residues 307–318 and A678 each bind ATP; that span reads GASTGSGGEIRD. Mg(2+) contacts are provided by E718, N722, and D886. Residues 1044–1297 enclose the Glutamine amidotransferase type-1 domain; sequence MAILREQGVN…MFQNARKNLG (254 aa). Residue C1137 is the Nucleophile of the active site. Catalysis depends on residues H1262 and E1264.

This sequence in the N-terminal section; belongs to the FGAMS family. In terms of assembly, monomer.

The protein localises to the cytoplasm. The catalysed reaction is N(2)-formyl-N(1)-(5-phospho-beta-D-ribosyl)glycinamide + L-glutamine + ATP + H2O = 2-formamido-N(1)-(5-O-phospho-beta-D-ribosyl)acetamidine + L-glutamate + ADP + phosphate + H(+). It functions in the pathway purine metabolism; IMP biosynthesis via de novo pathway; 5-amino-1-(5-phospho-D-ribosyl)imidazole from N(2)-formyl-N(1)-(5-phospho-D-ribosyl)glycinamide: step 1/2. Functionally, phosphoribosylformylglycinamidine synthase involved in the purines biosynthetic pathway. Catalyzes the ATP-dependent conversion of formylglycinamide ribonucleotide (FGAR) and glutamine to yield formylglycinamidine ribonucleotide (FGAM) and glutamate. The protein is Phosphoribosylformylglycinamidine synthase of Vibrio vulnificus (strain CMCP6).